The sequence spans 161 residues: Spermidine N(1)-acetyltransferase (161 aa).

The N-acetyltransferase domain occupies 3 to 160; sequence IEIRKLSIED…SDFIMEKKYE (158 aa). Residues 92-94, 99-104, N131, and S136 each bind acetyl-CoA; these read LYL and THKKIG. Y138 serves as the catalytic Proton donor. Position 140 (K140) interacts with acetyl-CoA.

It belongs to the acetyltransferase family. Monomer or homodimer.

It catalyses the reaction an alkane-alpha,omega-diamine + acetyl-CoA = an N-acetylalkane-alpha,omega-diamine + CoA + H(+). Involved in the protection against polyamine toxicity by regulating their concentration. Could also be involved in the negative control of sporulation as well as production of degradative enzymes such as alpha-amylase, levansucrase and alkaline phosphatase. Catalyzes the transfer of an acetyl group from acetyl coenzyme A (AcCoA) to an acceptor substrate and release both CoA and the acetylated product. It can use a variety of substrates including spermidine, L-tryptophan, L-leucine, L-lysine, dopamine and tyramine. This Thermoplasma acidophilum (strain ATCC 25905 / DSM 1728 / JCM 9062 / NBRC 15155 / AMRC-C165) protein is Spermidine N(1)-acetyltransferase.